We begin with the raw amino-acid sequence, 84 residues long: Cell division topological specificity factor (84 aa).

It belongs to the MinE family.

Functionally, prevents the cell division inhibition by proteins MinC and MinD at internal division sites while permitting inhibition at polar sites. This ensures cell division at the proper site by restricting the formation of a division septum at the midpoint of the long axis of the cell. This is Cell division topological specificity factor from Pseudomonas fluorescens (strain SBW25).